The primary structure comprises 456 residues: NADPH-ferredoxin reductase FprA (456 aa).

Ser14, Glu40, Leu48, and Val84 together coordinate FAD. Residues Arg110, 155-158 (NGNV), 199-200 (RR), and Glu211 each bind NADP(+). FAD-binding positions include Trp359 and 366–368 (GVI). Gly366 is a binding site for NADP(+).

The protein belongs to the ferredoxin--NADP reductase type 1 family. In terms of assembly, monomer. It depends on FAD as a cofactor.

It catalyses the reaction 2 reduced [2Fe-2S]-[ferredoxin] + NADP(+) + H(+) = 2 oxidized [2Fe-2S]-[ferredoxin] + NADPH. Functionally, may serve as electron transfer protein and supply electrons to P450 systems. In Mycobacterium tuberculosis (strain CDC 1551 / Oshkosh), this protein is NADPH-ferredoxin reductase FprA (fprA).